The sequence spans 426 residues: Enolase (426 aa).

Q162 serves as a coordination point for (2R)-2-phosphoglycerate. E204 acts as the Proton donor in catalysis. Mg(2+)-binding residues include D241, E286, and D313. Residues K338, R367, S368, and K389 each contribute to the (2R)-2-phosphoglycerate site. K338 functions as the Proton acceptor in the catalytic mechanism.

Belongs to the enolase family. Mg(2+) serves as cofactor.

Its subcellular location is the cytoplasm. The protein localises to the secreted. It localises to the cell surface. The catalysed reaction is (2R)-2-phosphoglycerate = phosphoenolpyruvate + H2O. Its pathway is carbohydrate degradation; glycolysis; pyruvate from D-glyceraldehyde 3-phosphate: step 4/5. Functionally, catalyzes the reversible conversion of 2-phosphoglycerate (2-PG) into phosphoenolpyruvate (PEP). It is essential for the degradation of carbohydrates via glycolysis. In Aliarcobacter butzleri (strain RM4018) (Arcobacter butzleri), this protein is Enolase.